The primary structure comprises 331 residues: ADP-L-glycero-D-manno-heptose-6-epimerase (331 aa).

NADP(+) is bound by residues 11 to 12 (FI), 32 to 33 (DN), Lys39, Lys54, 75 to 79 (EGACS), and Asn92. The active-site Proton acceptor is the Tyr139. An NADP(+)-binding site is contributed by Lys143. Asn168 contacts substrate. Residues Val169 and Lys177 each coordinate NADP(+). Lys177 functions as the Proton acceptor in the catalytic mechanism. Residues Arg179, His186, 200 to 203 (FGEY), Arg213, and Tyr292 contribute to the substrate site.

The protein belongs to the NAD(P)-dependent epimerase/dehydratase family. HldD subfamily. In terms of assembly, homopentamer. NADP(+) is required as a cofactor.

It carries out the reaction ADP-D-glycero-beta-D-manno-heptose = ADP-L-glycero-beta-D-manno-heptose. Its pathway is nucleotide-sugar biosynthesis; ADP-L-glycero-beta-D-manno-heptose biosynthesis; ADP-L-glycero-beta-D-manno-heptose from D-glycero-beta-D-manno-heptose 7-phosphate: step 4/4. Its function is as follows. Catalyzes the interconversion between ADP-D-glycero-beta-D-manno-heptose and ADP-L-glycero-beta-D-manno-heptose via an epimerization at carbon 6 of the heptose. The polypeptide is ADP-L-glycero-D-manno-heptose-6-epimerase (Ralstonia nicotianae (strain ATCC BAA-1114 / GMI1000) (Ralstonia solanacearum)).